Here is a 196-residue protein sequence, read N- to C-terminus: Prefoldin subunit 3 (196 aa).

The residue at position 2 (alanine 2) is an N-acetylalanine. Lysine 58 is modified (N6-acetyllysine).

This sequence belongs to the prefoldin subunit alpha family. In terms of assembly, heterohexamer of two PFD-alpha type and four PFD-beta type subunits. Binds to the C-terminal part of VHL.

The protein resides in the cytoplasm. Its subcellular location is the nucleus. Functionally, binds specifically to cytosolic chaperonin (c-CPN) and transfers target proteins to it. Binds to nascent polypeptide chain and promotes folding in an environment in which there are many competing pathways for nonnative proteins. This is Prefoldin subunit 3 (Vbp1) from Mus musculus (Mouse).